A 319-amino-acid polypeptide reads, in one-letter code: Ankyrin repeat domain-containing protein 1 (319 aa).

The stretch at 63–89 (EKQLEAELKKKKLEQRSKLENLEDLEI) forms a coiled coil. ANK repeat units follow at residues 152 to 181 (YKRTALHRACLEGHLAIVEKLMEAGAQIEF), 185 to 214 (LESTAIHWACRGGNLEVLKLLLNKGAKISA), 218 to 247 (LLSTALHVAVRTGHYECAEHLIACEADLNA), 251 to 280 (EGDTPLHDAVRLNRYKMIRLLIMYGADLTI), and 284 to 315 (AGKTPMDLVLNWQNGTKAIFDSLKENSYKTSR).

In terms of assembly, interacts with TTN/titin and YBX1.

Its subcellular location is the nucleus. In terms of biological role, may play an important role in endothelial cell activation. May act as a nuclear transcription factor that negatively regulates the expression of cardiac genes. This Oryctolagus cuniculus (Rabbit) protein is Ankyrin repeat domain-containing protein 1 (ANKRD1).